A 306-amino-acid chain; its full sequence is Putative S-adenosyl-L-methionine-dependent methyltransferase MAP_4190c (306 aa).

Residues D129 and 158–159 each bind S-adenosyl-L-methionine; that span reads DL.

It belongs to the UPF0677 family.

Exhibits S-adenosyl-L-methionine-dependent methyltransferase activity. This chain is Putative S-adenosyl-L-methionine-dependent methyltransferase MAP_4190c, found in Mycolicibacterium paratuberculosis (strain ATCC BAA-968 / K-10) (Mycobacterium paratuberculosis).